A 309-amino-acid polypeptide reads, in one-letter code: Cyclin-dependent kinase B1-1 (309 aa).

Residues 4-301 form the Protein kinase domain; it reads YEKLEKVGEG…AKTALDHPYF (298 aa). Residues 10-18 and Lys33 each bind ATP; that span reads VGEGTYGKV. Tyr15 is subject to Phosphotyrosine. The Proton acceptor role is filled by Asp142. Thr176 bears the Phosphothreonine; by CAK mark.

Belongs to the protein kinase superfamily. CMGC Ser/Thr protein kinase family. CDC2/CDKX subfamily. As to quaternary structure, interacts with CKS1. Interacts with CYCU3-1. Interacts with SIM, SMR1 and SMR2. In terms of tissue distribution, highly expressed in guard cells and stomatal precursor cells of cotyledons. Expressed in roots, stems, flowers and siliques.

It is found in the nucleus. It catalyses the reaction L-seryl-[protein] + ATP = O-phospho-L-seryl-[protein] + ADP + H(+). The enzyme catalyses L-threonyl-[protein] + ATP = O-phospho-L-threonyl-[protein] + ADP + H(+). The catalysed reaction is [DNA-directed RNA polymerase] + ATP = phospho-[DNA-directed RNA polymerase] + ADP + H(+). Phosphorylation at Thr-14 or Tyr-15 inactivates the enzyme, while phosphorylation at Thr-176 activates it. Its function is as follows. May control G2/M (mitosis) phase progression. Plays a role in regulating seedling growth in darkness via regulation of hypocotyl cell elongation and cotyledon cell development. Plays a role in stomatal development. Required to suppress endoreduplication. Together with CDKB1-2, promotes both the last division in the stomatal cell lineage as well as the number of stomata. In collaboration with MYB124 and MYB88, restrict the G1/S transition and chloroplast and nuclear number during stomatal formation, and normally maintain fate and developmental progression throughout the stomatal cell lineage. The chain is Cyclin-dependent kinase B1-1 (CDKB1-1) from Arabidopsis thaliana (Mouse-ear cress).